The chain runs to 424 residues: Protein pellino (424 aa).

Positions 1–21 (MVKRTDGTESPILAEDGGDGH) are disordered. Residue serine 10 is modified to Phosphoserine.

This sequence belongs to the pellino family. In terms of assembly, interacts with pll.

Its function is as follows. Scaffold protein involved in the Toll signaling pathway via its interaction with pelle/pll kinase. The sequence is that of Protein pellino (Pli) from Drosophila melanogaster (Fruit fly).